The primary structure comprises 194 residues: Probable proteasome subunit beta type-4 (194 aa).

Belongs to the peptidase T1B family. As to quaternary structure, the 26S proteasome consists of a 20S proteasome core and two 19S regulatory subunits. The 20S proteasome core is composed of 28 subunits that are arranged in four stacked rings, resulting in a barrel-shaped structure. The two end rings are each formed by seven alpha subunits, and the two central rings are each formed by seven beta subunits. The catalytic chamber with the active sites is on the inside of the barrel.

It is found in the cytoplasm. The protein resides in the nucleus. Its function is as follows. Non-catalytic component of the proteasome, a multicatalytic proteinase complex which is characterized by its ability to cleave peptides with Arg, Phe, Tyr, Leu, and Glu adjacent to the leaving group at neutral or slightly basic pH. The proteasome has an ATP-dependent proteolytic activity. The sequence is that of Probable proteasome subunit beta type-4 (PRO2) from Meyerozyma guilliermondii (strain ATCC 6260 / CBS 566 / DSM 6381 / JCM 1539 / NBRC 10279 / NRRL Y-324) (Yeast).